An 823-amino-acid polypeptide reads, in one-letter code: Nuclear pore complex protein Nup93-1 (823 aa).

It belongs to the nucleoporin interacting component (NIC) family. As to quaternary structure, part of the nuclear pore complex (NPC). Interacts with msk (via C-terminus); this association might be facilitated by Nup75. Interacts with Mad (preferentially when phosphorylated). Interacts with Nup154 (via N-terminus). Interacts with the Polycomb group (PcG) proteins Pc and E(z).

The protein resides in the nucleus membrane. The protein localises to the nucleus. It localises to the nuclear pore complex. Its subcellular location is the nucleoplasm. In terms of biological role, required for nuclear pore complex assembly, maintenance and function. Required for nuclear import of phosphorylated Mad via importin msk. Has no role in classical nuclear localization signal (cNLS)-dependent nuclear import via importin-beta. Mediates the association between the nuclear pore complex and a subclass of silenced regions bound by Polycomb group (PcG) proteins, enables long-range interactions between Polycomb loci and contributes to repression of polycomb targets. Together with Nup62 and Nup154, contributes to karyosome morphology and chromatin organization including attachment to the nuclear envelope in oocytes and nurse cells. In Drosophila melanogaster (Fruit fly), this protein is Nuclear pore complex protein Nup93-1.